A 278-amino-acid chain; its full sequence is MFGLKVKDAQKDDQKSSEYLSGEAGSQAGGSTQGTSTTTQRRGSSNENKVKVLQVAMKKKSDSEDNGQIELETNNLANAPIKRGSNNNQQVQLKADDFGTTSSSESGQSGTQGSTPSNPGPWTPWLTTEQIHNDPAKFAASILILYDAPYARNRTAIDRVDHLDPKVMTANYPPSWRTPKWNHHGLWDWKARDVLLQTTGFFNPRRHPEWFDGGQTVADNEKTGFDVDNSENTKQGFQKEADSDKSAPIALPFEAYFANIGNLTWFGQALLVFGICLS.

The span at 1 to 16 shows a compositional bias: basic and acidic residues; that stretch reads MFGLKVKDAQKDDQKS. 2 disordered regions span residues 1–86 and 98–126; these read MFGL…RGSN and FGTT…TPWL. 2 stretches are compositionally biased toward low complexity: residues 33-45 and 99-117; these read QGTS…RGSS and GTTS…STPS.

It belongs to the adhesin P1 family.

This is an uncharacterized protein from Mycoplasma pneumoniae (strain ATCC 29342 / M129 / Subtype 1) (Mycoplasmoides pneumoniae).